The primary structure comprises 220 residues: Probable transaldolase (220 aa).

Lysine 87 serves as the catalytic Schiff-base intermediate with substrate.

The protein belongs to the transaldolase family. Type 3B subfamily.

It is found in the cytoplasm. The enzyme catalyses D-sedoheptulose 7-phosphate + D-glyceraldehyde 3-phosphate = D-erythrose 4-phosphate + beta-D-fructose 6-phosphate. It functions in the pathway carbohydrate degradation; pentose phosphate pathway; D-glyceraldehyde 3-phosphate and beta-D-fructose 6-phosphate from D-ribose 5-phosphate and D-xylulose 5-phosphate (non-oxidative stage): step 2/3. Transaldolase is important for the balance of metabolites in the pentose-phosphate pathway. This is Probable transaldolase from Porphyromonas gingivalis (strain ATCC 33277 / DSM 20709 / CIP 103683 / JCM 12257 / NCTC 11834 / 2561).